A 281-amino-acid polypeptide reads, in one-letter code: Transcription factor LBX1 (281 aa).

Basic and acidic residues predominate over residues 1-20 (MTSKEDGKAAPGEERRRSPL). Residues 1-35 (MTSKEDGKAAPGEERRRSPLDHLPPPANSNKPLTP) form a disordered region. Residues 125–184 (RRKSRTAFTNHQIYELEKRFLYQKYLSPADRDQIAQQLGLTNAQVITWFQNRRAKLKRDL) constitute a DNA-binding region (homeobox). The segment at 214-281 (NSEATAGGGG…EEDEEIDVDD (68 aa)) is disordered. The segment covering 253-267 (SPASPLTDQPASSQD) has biased composition (polar residues). The segment covering 268-281 (CSEDEEDEEIDVDD) has biased composition (acidic residues).

In terms of assembly, interacts with SKOR1 which acts as a transcriptional corepressor.

It is found in the nucleus. In terms of biological role, transcription factor required for the development of GABAergic interneurons in the dorsal horn of the spinal cord and migration and further development of hypaxial muscle precursor cells for limb muscles, diaphragm and hypoglossal cord. This is Transcription factor LBX1 (LBX1) from Homo sapiens (Human).